The chain runs to 122 residues: Small ribosomal subunit protein uS13 (122 aa).

A disordered region spans residues 94–122 (LSLPVRGQRTKTNSRTRKGKRKTVAGKKK). Positions 101–122 (QRTKTNSRTRKGKRKTVAGKKK) are enriched in basic residues.

Belongs to the universal ribosomal protein uS13 family. As to quaternary structure, part of the 30S ribosomal subunit. Forms a loose heterodimer with protein S19. Forms two bridges to the 50S subunit in the 70S ribosome.

Located at the top of the head of the 30S subunit, it contacts several helices of the 16S rRNA. In the 70S ribosome it contacts the 23S rRNA (bridge B1a) and protein L5 of the 50S subunit (bridge B1b), connecting the 2 subunits; these bridges are implicated in subunit movement. Contacts the tRNAs in the A and P-sites. This Chlamydia trachomatis serovar A (strain ATCC VR-571B / DSM 19440 / HAR-13) protein is Small ribosomal subunit protein uS13.